We begin with the raw amino-acid sequence, 237 residues long: Lectin (237 aa).

The N-linked (GlcNAc...) asparagine glycan is linked to Asn-69. Ile-106 carries the blocked amino end (Ile) modification. Mn(2+) is bound by residues Glu-115 and Asp-117. Asp-117, Tyr-120, Asn-122, and Asp-127 together coordinate Ca(2+). Mn(2+) is bound by residues Asp-127 and His-132.

The protein belongs to the leguminous lectin family. In terms of assembly, tetramer of two alpha and two beta chains. The N-terminus of alpha chain is blocked. The alpha and beta chains are produced by proteolytic processing, with probably the loss of intervening amino acid(s).

Its function is as follows. D-mannose/D-glucose-binding lectin. Requires Ca(2+) and Mn(2+) ions for full activity. In Lablab purpureus (Hyacinth bean), this protein is Lectin.